Consider the following 355-residue polypeptide: NADH dehydrogenase [ubiquinone] 1 alpha subcomplex subunit 10, mitochondrial (355 aa).

The N-terminal 35 residues, Met-1–Lys-35, are a transit peptide targeting the mitochondrion. At Lys-122 the chain carries N6-acetyllysine; alternate. An N6-succinyllysine; alternate modification is found at Lys-122. Ser-250 is modified (phosphoserine; by PINK1). An N6-succinyllysine modification is found at Lys-285.

Belongs to the complex I NDUFA10 subunit family. In terms of assembly, complex I is composed of 45 different subunits. This a component of the hydrophobic protein fraction. FAD is required as a cofactor. Phosphorylation at Ser-250 by PINK1 is required for the binding and/or reduction of the complex I substrate ubiquinone. Post-translationally, acetylation of Lys-242 is observed in liver mitochondria from fasted mice but not from fed mice.

It is found in the mitochondrion matrix. Functionally, accessory subunit of the mitochondrial membrane respiratory chain NADH dehydrogenase (Complex I), that is believed not to be involved in catalysis. Complex I functions in the transfer of electrons from NADH to the respiratory chain. The immediate electron acceptor for the enzyme is believed to be ubiquinone. This is NADH dehydrogenase [ubiquinone] 1 alpha subcomplex subunit 10, mitochondrial (Ndufa10) from Mus musculus (Mouse).